We begin with the raw amino-acid sequence, 474 residues long: Aspartyl/glutamyl-tRNA(Asn/Gln) amidotransferase subunit B (474 aa).

This sequence belongs to the GatB/GatE family. GatB subfamily. As to quaternary structure, heterotrimer of A, B and C subunits.

It carries out the reaction L-glutamyl-tRNA(Gln) + L-glutamine + ATP + H2O = L-glutaminyl-tRNA(Gln) + L-glutamate + ADP + phosphate + H(+). The catalysed reaction is L-aspartyl-tRNA(Asn) + L-glutamine + ATP + H2O = L-asparaginyl-tRNA(Asn) + L-glutamate + ADP + phosphate + 2 H(+). Functionally, allows the formation of correctly charged Asn-tRNA(Asn) or Gln-tRNA(Gln) through the transamidation of misacylated Asp-tRNA(Asn) or Glu-tRNA(Gln) in organisms which lack either or both of asparaginyl-tRNA or glutaminyl-tRNA synthetases. The reaction takes place in the presence of glutamine and ATP through an activated phospho-Asp-tRNA(Asn) or phospho-Glu-tRNA(Gln). The protein is Aspartyl/glutamyl-tRNA(Asn/Gln) amidotransferase subunit B of Wolbachia pipientis wMel.